Consider the following 262-residue polypeptide: Methanethiol S-methyltransferase (262 aa).

Helical transmembrane passes span 22–42 (LYSLLSYLFFLMTLLYLIGFV), 55–75 (PGASWPLALLVDVLLITLFAV), 100–120 (ATYVLASSVVLVVMFWLWQPI), 134–154 (AVLTTLFWLGWGLILVATFLI), and 195–215 (GFLMAFWATPEMTVGHLVFAL).

This sequence belongs to the nurim family.

The protein resides in the membrane. It catalyses the reaction methanethiol + S-adenosyl-L-methionine = dimethyl sulfide + S-adenosyl-L-homocysteine + H(+). Its function is as follows. Catalyzes the methylation of methanethiol (MeSH) to yield dimethylsulphide (DMS). The protein is Methanethiol S-methyltransferase of Pseudomonas deceptionensis.